Reading from the N-terminus, the 825-residue chain is Actin filament-associated protein 1-like 2 (825 aa).

A Phosphotyrosine modification is found at Y56. Positions 62–163 are disordered; the sequence is VNGEQNSASP…SKGKAAPYQW (102 aa). Over residues 80-94 the composition is skewed to polar residues; the sequence is PLTNGEPSQHSSAPQ. T113 is subject to Phosphothreonine. PH domains lie at 175–271 and 353–447; these read DARI…EVSG and SLET…SESG. Position 408 is a phosphoserine (S408). Phosphotyrosine is present on Y413. Residue S484 is modified to Phosphoserine. The tract at residues 571–614 is disordered; the sequence is TLTVDPKPGTTPEEPHTESPGDPEVQQRQPEVQESSEPIEPTPR. A compositionally biased stretch (low complexity) spans 593 to 608; that stretch reads PEVQQRQPEVQESSEP. Residues 657 to 754 adopt a coiled-coil conformation; sequence AEIKLGKNRT…VKDNLKKAEA (98 aa). Residues 757–801 form a disordered region; the sequence is VTLGTTVDTTHLDNMSPRPQPKAATPNPPPDSTPVNSASVLKNRP. Residues 759 to 769 are compositionally biased toward polar residues; it reads LGTTVDTTHLD.

As to quaternary structure, interacts with SRC. Interacts with LCK when tyrosine phosphorylated. Tyrosine phosphorylated (by SRC).

The protein localises to the cytoplasm. In terms of biological role, may play a role in a signaling cascade by enhancing the kinase activity of SRC. Contributes to SRC-regulated transcription activation. In Mus musculus (Mouse), this protein is Actin filament-associated protein 1-like 2 (Afap1l2).